We begin with the raw amino-acid sequence, 150 residues long: Large ribosomal subunit protein bL9 (150 aa).

It belongs to the bacterial ribosomal protein bL9 family.

Functionally, binds to the 23S rRNA. This is Large ribosomal subunit protein bL9 from Shewanella loihica (strain ATCC BAA-1088 / PV-4).